We begin with the raw amino-acid sequence, 781 residues long: Matrix non-peptidase homolog 1 (781 aa).

The first 27 residues, 1-27, serve as a signal peptide directing secretion; that stretch reads MTPPPASPSKKAKSSWLLIALIAVIIG. Asn-54 carries an N-linked (GlcNAc...) asparagine glycan. The span at 63–94 shows a compositional bias: low complexity; that stretch reads TSKATVSTTTTQSATTPSTTTTRIEETTTTTS. Positions 63 to 113 are disordered; that stretch reads TSKATVSTTTTQSATTPSTTTTRIEETTTTTSGAFDESVKNSEASTSTIPT. N-linked (GlcNAc...) asparagine glycosylation is found at Asn-183, Asn-341, Asn-375, and Asn-520.

The chain is Matrix non-peptidase homolog 1 (mnp-1) from Caenorhabditis elegans.